The following is a 201-amino-acid chain: Recombination protein RecR (201 aa).

The C4-type zinc finger occupies 57 to 72 (CADCRTFTEQEHCTIC). Residues 81–176 (GQICVVESPA…LASRIAHGVP (96 aa)) form the Toprim domain.

This sequence belongs to the RecR family.

Its function is as follows. May play a role in DNA repair. It seems to be involved in an RecBC-independent recombinational process of DNA repair. It may act with RecF and RecO. The protein is Recombination protein RecR of Yersinia enterocolitica serotype O:8 / biotype 1B (strain NCTC 13174 / 8081).